A 258-amino-acid chain; its full sequence is MLDSVASTLQLSELLSLTKAEQSIRLAEINVELEMLSAQERVAWALQNLEGAHAVSSSFGIQAAVMLHLLSKQQADIPVILTDTGYLFPETYQFIDELTKSLNLNLKVYRANESANWQEARYGKLWEQGIEGIEKYNKLNKVEPMRRALNELNVKTWFSGLRREQSQSRAGLPILSIQNGVFKFLPVVDWSNKDVHYYLKEHGLSYHPLWEQGYLSVGDTHTTQKWEPGMSEEETRFFGLKRECGLHEEDNEQDGSGI.

Catalysis depends on Cys-244, which acts as the Nucleophile; cysteine thiosulfonate intermediate.

It belongs to the PAPS reductase family. CysH subfamily.

Its subcellular location is the cytoplasm. The enzyme catalyses [thioredoxin]-disulfide + sulfite + adenosine 3',5'-bisphosphate + 2 H(+) = [thioredoxin]-dithiol + 3'-phosphoadenylyl sulfate. It participates in sulfur metabolism; hydrogen sulfide biosynthesis; sulfite from sulfate: step 3/3. Its function is as follows. Catalyzes the formation of sulfite from phosphoadenosine 5'-phosphosulfate (PAPS) using thioredoxin as an electron donor. This chain is Phosphoadenosine 5'-phosphosulfate reductase, found in Vibrio vulnificus (strain YJ016).